Here is a 217-residue protein sequence, read N- to C-terminus: Nascent polypeptide-associated complex subunit alpha-like protein 2 (217 aa).

Residues 1–81 (MSPPPAVVTE…SEKKSRKAML (81 aa)) are disordered. Residues 37 to 60 (PIVEDVKDDEDDDDDDEEEEDDDA) show a composition bias toward acidic residues. Positions 70–135 (SRSEKKSRKA…AKIEDLSSQL (66 aa)) constitute an NAC-A/B domain. The UBA domain occupies 178–215 (VEARDIDLVMTQAGVSRSKAVKALKSHDGDIVSAIMEL).

It belongs to the NAC-alpha family.

May promote appropriate targeting of ribosome-nascent polypeptide complexes. In Arabidopsis thaliana (Mouse-ear cress), this protein is Nascent polypeptide-associated complex subunit alpha-like protein 2.